The following is a 243-amino-acid chain: Pyridoxine 5'-phosphate synthase (243 aa).

N9 is a 3-amino-2-oxopropyl phosphate binding site. 11-12 contributes to the 1-deoxy-D-xylulose 5-phosphate binding site; the sequence is DH. R20 is a binding site for 3-amino-2-oxopropyl phosphate. Residue H45 is the Proton acceptor of the active site. Residues R47 and H52 each contribute to the 1-deoxy-D-xylulose 5-phosphate site. E72 serves as the catalytic Proton acceptor. T102 is a binding site for 1-deoxy-D-xylulose 5-phosphate. H193 functions as the Proton donor in the catalytic mechanism. 3-amino-2-oxopropyl phosphate-binding positions include G194 and 215-216; that span reads GH.

Belongs to the PNP synthase family. As to quaternary structure, homooctamer; tetramer of dimers.

It localises to the cytoplasm. The catalysed reaction is 3-amino-2-oxopropyl phosphate + 1-deoxy-D-xylulose 5-phosphate = pyridoxine 5'-phosphate + phosphate + 2 H2O + H(+). Its pathway is cofactor biosynthesis; pyridoxine 5'-phosphate biosynthesis; pyridoxine 5'-phosphate from D-erythrose 4-phosphate: step 5/5. Its function is as follows. Catalyzes the complicated ring closure reaction between the two acyclic compounds 1-deoxy-D-xylulose-5-phosphate (DXP) and 3-amino-2-oxopropyl phosphate (1-amino-acetone-3-phosphate or AAP) to form pyridoxine 5'-phosphate (PNP) and inorganic phosphate. The chain is Pyridoxine 5'-phosphate synthase from Vibrio vulnificus (strain CMCP6).